The sequence spans 270 residues: MNIIITGANGYIGRYVVKELLNKGHKVIAILFDGESPHSFLSGAELFYGDIFALSQEKKVDLVQNAECLLHLAWQAGFNHRDPSHLNNVMKHYQFLTSMAELGIKNISVAGTMHEVGYFVGPIDANTPCNPRNPYGIAKNFLRQAMFDFASVTPELNLRWLRFYYITGDDRFNNSIFTKILKAEDEVQEYFPLNSGEMLYDFVDIKDLSLQIEERIISKESGIFNCCSGKPKSLRTAVEEFIAEHNLKIKPKYNVFPARSYDSMAVWGAK.

NAD(+)-binding positions include 11–12 (YI), 50–51 (DI), 72–76 (LAWQA), N87, T112, Y135, and K139. Substrate-binding residues include T112 and Y135. Y135 acts as the Proton acceptor in catalysis.

Belongs to the NAD(P)-dependent epimerase/dehydratase family.

It carries out the reaction dTDP-6-deoxy-beta-L-talose + NAD(+) = dTDP-4-dehydro-beta-L-rhamnose + NADH + H(+). Its pathway is bacterial outer membrane biogenesis; LPS O-antigen biosynthesis. Functionally, catalyzes the reduction of dTDP-6-deoxy-L-lyxo-4-hexulose to dTDP-6-deoxy-L-talose. The polypeptide is dTDP-6-deoxy-L-talose 4-dehydrogenase (NAD(+)) (tll) (Aggregatibacter actinomycetemcomitans (Actinobacillus actinomycetemcomitans)).